Here is a 276-residue protein sequence, read N- to C-terminus: Streptothricin hydrolase (276 aa).

Cys-176 acts as the Nucleophile in catalysis. Residues 250-276 form a disordered region; the sequence is PEAPAAAAAPAAGTGLSPAGPPPAPAR. Residues 252–267 show a composition bias toward low complexity; the sequence is APAAAAAPAAGTGLSP.

The protein belongs to the isochorismatase family. Homodimer. Does not require a metal cofactor. serves as cofactor.

The catalysed reaction is streptothricin F + H2O = streptothricin F acid. Functionally, catalyzes the hydrolysis of the amide bond of streptolidine lactam, thereby conferring streptothricin (ST) resistance. Can hydrolyze streptothricin-F and streptothricin-D. However, this strain is believed to be a ST nonproducer, which raises the possibility that its true role may not be its involvement in self-resistance to STs. May catalyze the hydrolysis of naturally occurring cyclic amide compounds that are structurally related to STs. This is Streptothricin hydrolase (sttH) from Streptomyces noursei (Streptomyces albulus).